We begin with the raw amino-acid sequence, 375 residues long: Chaperone protein DnaJ (375 aa).

A J domain is found at 4 to 68; the sequence is DYYEILGVSR…ETRARYDRFG (65 aa). The CR-type zinc-finger motif lies at 135–217; the sequence is GGEKEIRISH…CDGKGANQVT (83 aa). Cysteine 148, cysteine 151, cysteine 165, cysteine 168, cysteine 191, cysteine 194, cysteine 205, and cysteine 208 together coordinate Zn(2+). 4 CXXCXGXG motif repeats span residues 148 to 155, 165 to 172, 191 to 198, and 205 to 212; these read CEVCSGSG, CSTCSGSG, CPTCNGTG, and CDACDGKG.

The protein belongs to the DnaJ family. Homodimer. Zn(2+) is required as a cofactor.

It is found in the cytoplasm. Its function is as follows. Participates actively in the response to hyperosmotic and heat shock by preventing the aggregation of stress-denatured proteins and by disaggregating proteins, also in an autonomous, DnaK-independent fashion. Unfolded proteins bind initially to DnaJ; upon interaction with the DnaJ-bound protein, DnaK hydrolyzes its bound ATP, resulting in the formation of a stable complex. GrpE releases ADP from DnaK; ATP binding to DnaK triggers the release of the substrate protein, thus completing the reaction cycle. Several rounds of ATP-dependent interactions between DnaJ, DnaK and GrpE are required for fully efficient folding. Also involved, together with DnaK and GrpE, in the DNA replication of plasmids through activation of initiation proteins. This is Chaperone protein DnaJ from Nostoc punctiforme (strain ATCC 29133 / PCC 73102).